An 880-amino-acid polypeptide reads, in one-letter code: Alanine--tRNA ligase (880 aa).

Zn(2+)-binding residues include His-563, His-567, Cys-673, and His-677.

This sequence belongs to the class-II aminoacyl-tRNA synthetase family. It depends on Zn(2+) as a cofactor.

Its subcellular location is the cytoplasm. It carries out the reaction tRNA(Ala) + L-alanine + ATP = L-alanyl-tRNA(Ala) + AMP + diphosphate. Functionally, catalyzes the attachment of alanine to tRNA(Ala) in a two-step reaction: alanine is first activated by ATP to form Ala-AMP and then transferred to the acceptor end of tRNA(Ala). Also edits incorrectly charged Ser-tRNA(Ala) and Gly-tRNA(Ala) via its editing domain. This Caulobacter vibrioides (strain ATCC 19089 / CIP 103742 / CB 15) (Caulobacter crescentus) protein is Alanine--tRNA ligase.